Reading from the N-terminus, the 371-residue chain is Cytochrome b (371 aa).

4 consecutive transmembrane segments (helical) span residues 25-45 (FGSM…FLSM), 69-90 (WMMQ…YMHI), 105-125 (WLSG…GYVL), and 170-190 (FFAL…VHIM). 2 residues coordinate heme b: H75 and H89. Residues H174 and H188 each contribute to the heme b site. Position 193 (H193) interacts with a ubiquinone. 4 consecutive transmembrane segments (helical) span residues 218 to 238 (YKDL…VSFF), 280 to 300 (LGGA…PFTH), 312 to 332 (LMQF…WTAT), and 339 to 358 (FTTI…MSNP).

This sequence belongs to the cytochrome b family. As to quaternary structure, the cytochrome bc1 complex contains 3 respiratory subunits (MT-CYB, CYC1 and UQCRFS1), 2 core proteins (UQCRC1 and UQCRC2) and probably 6 low-molecular weight proteins. Heme b is required as a cofactor.

It is found in the mitochondrion inner membrane. Functionally, component of the ubiquinol-cytochrome c reductase complex (complex III or cytochrome b-c1 complex) that is part of the mitochondrial respiratory chain. The b-c1 complex mediates electron transfer from ubiquinol to cytochrome c. Contributes to the generation of a proton gradient across the mitochondrial membrane that is then used for ATP synthesis. The sequence is that of Cytochrome b (MT-CYB) from Candoia carinata (Papuan tree boa).